The sequence spans 423 residues: Serine--tRNA ligase (423 aa).

Residue 231-233 coordinates L-serine; the sequence is TGE. 262–264 is a binding site for ATP; sequence RSE. L-serine is bound at residue E285. Residue 349-352 coordinates ATP; it reads EISS. S385 contributes to the L-serine binding site.

The protein belongs to the class-II aminoacyl-tRNA synthetase family. Type-1 seryl-tRNA synthetase subfamily. As to quaternary structure, homodimer. The tRNA molecule binds across the dimer.

Its subcellular location is the cytoplasm. The catalysed reaction is tRNA(Ser) + L-serine + ATP = L-seryl-tRNA(Ser) + AMP + diphosphate + H(+). It carries out the reaction tRNA(Sec) + L-serine + ATP = L-seryl-tRNA(Sec) + AMP + diphosphate + H(+). It functions in the pathway aminoacyl-tRNA biosynthesis; selenocysteinyl-tRNA(Sec) biosynthesis; L-seryl-tRNA(Sec) from L-serine and tRNA(Sec): step 1/1. Catalyzes the attachment of serine to tRNA(Ser). Is also able to aminoacylate tRNA(Sec) with serine, to form the misacylated tRNA L-seryl-tRNA(Sec), which will be further converted into selenocysteinyl-tRNA(Sec). The polypeptide is Serine--tRNA ligase (Coxiella burnetii (strain CbuG_Q212) (Coxiella burnetii (strain Q212))).